A 371-amino-acid chain; its full sequence is MANYSHAGDHNILQNVSPLATFLKLTSLGFIIGVGVVGNLLISILLVKDKSLHRAPYYFLLDLCASDILRSAICFPFVFTSVKNGSAWTYGTLTCKVIAFLGVLSCFHTAFMLFCVSVTRYLAIAHHRFYTKRLTFWTCLAVICMVWTLSVAMAFPPVLDVGTYSFIREEDQCTFQHRSFRANDSLGFMLLLALILLATQLVYLKLIFFVHDRRKMKPVQFVPAVSQNWTFHGPGASGQAAANWLAGFGRGPTPPTLLGIRQNSNAAGRRRLLVLDEFKTEKRISRMFYIITFFFLSLWGPYLVACYWRVFARGPVIPGGYLTAAVWMSFAQAGVNPFICIFSNRELRRCFSTTLLYCRKSRLPREPYCVI.

Topologically, residues 1-26 (MANYSHAGDHNILQNVSPLATFLKLT) are extracellular. N-linked (GlcNAc...) asparagine glycosylation occurs at asparagine 3. A helical membrane pass occupies residues 27-47 (SLGFIIGVGVVGNLLISILLV). Topologically, residues 48 to 58 (KDKSLHRAPYY) are cytoplasmic. The helical transmembrane segment at 59–79 (FLLDLCASDILRSAICFPFVF) threads the bilayer. The Extracellular portion of the chain corresponds to 80 to 96 (TSVKNGSAWTYGTLTCK). N-linked (GlcNAc...) asparagine glycosylation occurs at asparagine 84. Residues cysteine 95 and cysteine 173 are joined by a disulfide bond. The chain crosses the membrane as a helical span at residues 97–117 (VIAFLGVLSCFHTAFMLFCVS). At 118 to 138 (VTRYLAIAHHRFYTKRLTFWT) the chain is on the cytoplasmic side. Residues 139–159 (CLAVICMVWTLSVAMAFPPVL) traverse the membrane as a helical segment. Topologically, residues 160–189 (DVGTYSFIREEDQCTFQHRSFRANDSLGFM) are extracellular. Residue asparagine 183 is glycosylated (N-linked (GlcNAc...) asparagine). Residues 190–210 (LLLALILLATQLVYLKLIFFV) traverse the membrane as a helical segment. The Cytoplasmic segment spans residues 211-287 (HDRRKMKPVQ…FKTEKRISRM (77 aa)). The helical transmembrane segment at 288–308 (FYIITFFFLSLWGPYLVACYW) threads the bilayer. Topologically, residues 309–321 (RVFARGPVIPGGY) are extracellular. The helical transmembrane segment at 322-342 (LTAAVWMSFAQAGVNPFICIF) threads the bilayer. The Cytoplasmic portion of the chain corresponds to 343–371 (SNRELRRCFSTTLLYCRKSRLPREPYCVI).

The protein belongs to the G-protein coupled receptor 1 family.

The protein resides in the cell membrane. Functionally, orphan receptor. The chain is Probable G protein-coupled receptor 85 (gpr85) from Danio rerio (Zebrafish).